The primary structure comprises 443 residues: Probable lysophospholipase BODYGUARD 5 (443 aa).

Positions 1 to 52 are cleaved as a signal peptide; it reads MITSSFSEKCTSVINGAPSWAVFFLFDLLDYFLCIVFRFLDEVMEEKSESCH. A lipid anchor (N-palmitoyl cysteine) is attached at Cys-53. Residues 163 to 268 enclose the AB hydrolase-1 domain; sequence VIFVHGFLAS…VKSVALVAPP (106 aa). Residue His-167 is part of the active site. Residue Ser-242 is the Nucleophile of the active site. Residues Asp-387 and His-415 each act as charge relay system in the active site.

It localises to the cell membrane. The protein localises to the secreted. The protein resides in the cell wall. Functionally, involved in cuticle development and morphogenesis. The chain is Probable lysophospholipase BODYGUARD 5 from Arabidopsis thaliana (Mouse-ear cress).